Here is a 57-residue protein sequence, read N- to C-terminus: UPF0337 protein SCO0678 (57 aa).

Composition is skewed to basic and acidic residues over residues 1–22 (MAGNEKSRAKMEQAKGKAKEAA) and 42–57 (GDARQAKEKGKDVFRH). The disordered stretch occupies residues 1-57 (MAGNEKSRAKMEQAKGKAKEAAGRAVGNERMTAEGRAAQSKGDARQAKEKGKDVFRH).

The protein belongs to the UPF0337 (CsbD) family.

This chain is UPF0337 protein SCO0678, found in Streptomyces coelicolor (strain ATCC BAA-471 / A3(2) / M145).